The chain runs to 295 residues: Mediator of RNA polymerase II transcription subunit 27 (295 aa).

The protein belongs to the Mediator complex subunit 27 family. In terms of assembly, component of the Mediator complex.

The protein localises to the nucleus. Its function is as follows. Component of the Mediator complex, a coactivator involved in the regulated transcription of nearly all RNA polymerase II-dependent genes. Mediator functions as a bridge to convey information from gene-specific regulatory proteins to the basal RNA polymerase II transcription machinery. Mediator is recruited to promoters by direct interactions with regulatory proteins and serves as a scaffold for the assembly of a functional preinitiation complex with RNA polymerase II and the general transcription factors. In Anopheles gambiae (African malaria mosquito), this protein is Mediator of RNA polymerase II transcription subunit 27 (MED27).